Here is a 232-residue protein sequence, read N- to C-terminus: Ubiquinone biosynthesis O-methyltransferase (232 aa).

Positions 36, 55, 76, and 120 each coordinate S-adenosyl-L-methionine.

It belongs to the methyltransferase superfamily. UbiG/COQ3 family.

The enzyme catalyses a 3-demethylubiquinol + S-adenosyl-L-methionine = a ubiquinol + S-adenosyl-L-homocysteine + H(+). It carries out the reaction a 3-(all-trans-polyprenyl)benzene-1,2-diol + S-adenosyl-L-methionine = a 2-methoxy-6-(all-trans-polyprenyl)phenol + S-adenosyl-L-homocysteine + H(+). It functions in the pathway cofactor biosynthesis; ubiquinone biosynthesis. In terms of biological role, O-methyltransferase that catalyzes the 2 O-methylation steps in the ubiquinone biosynthetic pathway. This is Ubiquinone biosynthesis O-methyltransferase from Burkholderia multivorans (strain ATCC 17616 / 249).